The following is a 190-amino-acid chain: UPF0340 protein BT9727_4999 (190 aa).

Belongs to the UPF0340 family.

This is UPF0340 protein BT9727_4999 from Bacillus thuringiensis subsp. konkukian (strain 97-27).